The following is a 485-amino-acid chain: NADH-quinone oxidoreductase subunit N (485 aa).

14 consecutive transmembrane segments (helical) span residues 8-28 (LIAL…MLSI), 35-55 (FLNA…LWFV), 71-91 (GFAM…CTFA), 105-125 (FYLL…ANHL), 127-147 (SLFL…GYAF), 159-179 (YTIL…LVYA), 203-223 (LLAG…LVPF), 235-255 (PAPV…GVVM), 271-291 (VVLA…ALSQ), 297-317 (LLGY…IALQ), 326-346 (VGVY…VVSL), 373-393 (AAVM…LGFI), 408-430 (WWLV…RVAV), and 455-475 (IVVL…QPLI).

It belongs to the complex I subunit 2 family. NDH-1 is composed of 13 different subunits. Subunits NuoA, H, J, K, L, M, N constitute the membrane sector of the complex.

It localises to the cell inner membrane. The enzyme catalyses a quinone + NADH + 5 H(+)(in) = a quinol + NAD(+) + 4 H(+)(out). In terms of biological role, NDH-1 shuttles electrons from NADH, via FMN and iron-sulfur (Fe-S) centers, to quinones in the respiratory chain. The immediate electron acceptor for the enzyme in this species is believed to be ubiquinone. Couples the redox reaction to proton translocation (for every two electrons transferred, four hydrogen ions are translocated across the cytoplasmic membrane), and thus conserves the redox energy in a proton gradient. This is NADH-quinone oxidoreductase subunit N from Escherichia coli (strain ATCC 8739 / DSM 1576 / NBRC 3972 / NCIMB 8545 / WDCM 00012 / Crooks).